Consider the following 375-residue polypeptide: Probable protein-glutamate methylesterase BB_0415 (375 aa).

Residues 6–120 (SVLIIEYFAV…SHEIKKEQII (115 aa)) enclose the Response regulatory domain. The 193-residue stretch at 183–375 (KLRKFDIIAI…KLLKAILINS (193 aa)) folds into the CheB-type methylesterase domain. Residues Ser-195, His-221, and Asp-317 contribute to the active site.

It catalyses the reaction [protein]-L-glutamate 5-O-methyl ester + H2O = L-glutamyl-[protein] + methanol + H(+). The protein is Probable protein-glutamate methylesterase BB_0415 of Borreliella burgdorferi (strain ATCC 35210 / DSM 4680 / CIP 102532 / B31) (Borrelia burgdorferi).